Reading from the N-terminus, the 106-residue chain is Iron-sulfur cluster assembly protein CyaY (106 aa).

This sequence belongs to the frataxin family.

Its function is as follows. Involved in iron-sulfur (Fe-S) cluster assembly. May act as a regulator of Fe-S biogenesis. The protein is Iron-sulfur cluster assembly protein CyaY of Salmonella agona (strain SL483).